A 435-amino-acid chain; its full sequence is Protein GOLM2 (435 aa).

Met1 bears the N-acetylmethionine mark. The Cytoplasmic portion of the chain corresponds to 1–14 (MVGFGANRRAGRLP). The chain crosses the membrane as a helical; Signal-anchor for type II membrane protein span at residues 15 to 35 (SFVLVVLLVVIVVLAFNYWSI). A coiled-coil region spans residues 35–194 (ISSRHVLLQE…DQFLQEQKET (160 aa)). Topologically, residues 36 to 435 (SSRHVLLQEE…YGKQRFSDVL (400 aa)) are lumenal. Basic and acidic residues-rich tracts occupy residues 191–212 (QKET…DHGA) and 223–239 (DANK…PHGK). Disordered regions lie at residues 191–239 (QKET…PHGK) and 271–435 (PPVL…SDVL). Ser232 carries the post-translational modification Phosphoserine. Composition is skewed to polar residues over residues 282 to 294 (QTIS…QPLS) and 302 to 320 (HLNQ…SNPL). The span at 343-361 (ATRDRANDFHKLKQSRFFD) shows a compositional bias: basic and acidic residues. Ser365 bears the Phosphoserine mark. Over residues 398 to 417 (YNEEEDGDGGEEDVQDDEER) the composition is skewed to acidic residues. Over residues 425–435 (DYGKQRFSDVL) the composition is skewed to basic and acidic residues.

It belongs to the GOLM family.

Its subcellular location is the membrane. This chain is Protein GOLM2, found in Mus musculus (Mouse).